The chain runs to 160 residues: Protein-export protein SecB (160 aa).

Belongs to the SecB family. As to quaternary structure, homotetramer, a dimer of dimers. One homotetramer interacts with 1 SecA dimer.

It is found in the cytoplasm. In terms of biological role, one of the proteins required for the normal export of preproteins out of the cell cytoplasm. It is a molecular chaperone that binds to a subset of precursor proteins, maintaining them in a translocation-competent state. It also specifically binds to its receptor SecA. The polypeptide is Protein-export protein SecB (Rhodospirillum rubrum (strain ATCC 11170 / ATH 1.1.1 / DSM 467 / LMG 4362 / NCIMB 8255 / S1)).